Reading from the N-terminus, the 372-residue chain is Protein-glutamate methylesterase/protein-glutamine glutaminase 1 (372 aa).

The 118-residue stretch at 4-121 (KVLVVDDSSF…ATNKDDAILL (118 aa)) folds into the Response regulatory domain. 4-aspartylphosphate is present on D55. The tract at residues 138-174 (VVRPTTPTPPPRSSASSVLGGVSTHTQPAPVRSSHAA) is disordered. The CheB-type methylesterase domain maps to 179–372 (SGKQYKLLLI…ESILKESARG (194 aa)). Catalysis depends on residues S191, H218, and D314.

Belongs to the CheB family. Phosphorylated by CheA. Phosphorylation of the N-terminal regulatory domain activates the methylesterase activity.

It localises to the cytoplasm. It catalyses the reaction [protein]-L-glutamate 5-O-methyl ester + H2O = L-glutamyl-[protein] + methanol + H(+). The catalysed reaction is L-glutaminyl-[protein] + H2O = L-glutamyl-[protein] + NH4(+). Its function is as follows. Involved in chemotaxis. Part of a chemotaxis signal transduction system that modulates chemotaxis in response to various stimuli. Catalyzes the demethylation of specific methylglutamate residues introduced into the chemoreceptors (methyl-accepting chemotaxis proteins or MCP) by CheR. Also mediates the irreversible deamidation of specific glutamine residues to glutamic acid. The chain is Protein-glutamate methylesterase/protein-glutamine glutaminase 1 from Shewanella sp. (strain MR-4).